The following is a 492-amino-acid chain: Cobyric acid synthase (492 aa).

The 189-residue stretch at 252 to 440 (QLNVVVPVLT…LHGIFEQTEA (189 aa)) folds into the GATase cobBQ-type domain. Residue cysteine 333 is the Nucleophile of the active site. Residue histidine 432 is part of the active site.

This sequence belongs to the CobB/CobQ family. CobQ subfamily.

It participates in cofactor biosynthesis; adenosylcobalamin biosynthesis. Catalyzes amidations at positions B, D, E, and G on adenosylcobyrinic A,C-diamide. NH(2) groups are provided by glutamine, and one molecule of ATP is hydrogenolyzed for each amidation. The sequence is that of Cobyric acid synthase from Photobacterium profundum (strain SS9).